Here is a 315-residue protein sequence, read N- to C-terminus: Thioredoxin reductase (315 aa).

34-41 (EGQKVGGQ) contacts FAD. C134 and C137 form a disulfide bridge. 282 to 291 (DIRVKSLRQV) is a binding site for FAD.

It belongs to the class-II pyridine nucleotide-disulfide oxidoreductase family. Homodimer. Requires FAD as cofactor.

It is found in the cytoplasm. The enzyme catalyses [thioredoxin]-dithiol + NADP(+) = [thioredoxin]-disulfide + NADPH + H(+). This is Thioredoxin reductase (trxB) from Peptoclostridium acidaminophilum (Eubacterium acidaminophilum).